We begin with the raw amino-acid sequence, 224 residues long: MGRGRYPARLKVTVPPPEIAARYYRSWPAHELYHHPDRFPLLNAESLFGRNAPLTLELGCATGEYICTLATAQPDACFVGVDIVAKPLYRAVERAVELGLENIIFLQADARLLYQRIPDCVLTTIILHFPPPLLRNRQRNQLLVSAQMLGCAERSLVPGGYLSFLTDHPDLFSLMQELLPAFPRLRGLPASPSELAVFESHYHRRWAARGREIRGLRIERIAEE.

3 residues coordinate S-adenosyl-L-methionine: glutamate 57, aspartate 82, and aspartate 109. Position 167 (aspartate 167) interacts with substrate.

This sequence belongs to the class I-like SAM-binding methyltransferase superfamily. TrmB family.

It carries out the reaction guanosine(46) in tRNA + S-adenosyl-L-methionine = N(7)-methylguanosine(46) in tRNA + S-adenosyl-L-homocysteine. The protein operates within tRNA modification; N(7)-methylguanine-tRNA biosynthesis. Its function is as follows. Catalyzes the formation of N(7)-methylguanine at position 46 (m7G46) in tRNA. In Chloroflexus aggregans (strain MD-66 / DSM 9485), this protein is tRNA (guanine-N(7)-)-methyltransferase.